The following is a 365-amino-acid chain: Peridinin-chlorophyll a-binding protein, chloroplastic (365 aa).

The transit peptide at 1–52 (MVRGARKAIAVGVAVAVACGLQKHLNFVPGPRHAAPVAAAAASMMMAPAAFA) directs the protein to the chloroplast. Repeat copies occupy residues 53–215 (DEIG…VPSG) and 216–365 (DKIG…ASQR).

Monomer.

It localises to the plastid. The protein resides in the chloroplast. Water-soluble antenna for capture of solar energy in the blue-green range. Peridinin is an asymmetric carotenoid. The chain is Peridinin-chlorophyll a-binding protein, chloroplastic from Symbiodinium sp. (Dinoflagellate).